Consider the following 525-residue polypeptide: Vesicular inhibitory amino acid transporter (525 aa).

The Cytoplasmic portion of the chain corresponds to Met-1–Met-132. Residues Phe-133–Ile-153 traverse the membrane as a helical segment. At Phe-154 to Arg-204 the chain is on the lumenal, vesicle side. Tyr-186 is modified (3'-nitrotyrosine). The helical transmembrane segment at Val-205–Ser-225 threads the bilayer. At Gly-226–Lys-265 the chain is on the cytoplasmic side. Residues Phe-266–Leu-286 form a helical membrane-spanning segment. The Lumenal, vesicle portion of the chain corresponds to Ser-287–Lys-305. A helical membrane pass occupies residues Phe-306–Leu-326. Residues Glu-327–Asn-341 are Cytoplasmic-facing. The helical transmembrane segment at Trp-342 to Trp-362 threads the bilayer. Topologically, residues Ala-363 to Asn-383 are lumenal, vesicle. Residues Ile-384 to Val-404 traverse the membrane as a helical segment. Over Leu-405–Ala-438 the chain is Cytoplasmic. Residues Leu-439–Leu-459 traverse the membrane as a helical segment. Residues Thr-460 to Gly-461 are Lumenal, vesicle-facing. Residues Ser-462–Trp-482 traverse the membrane as a helical segment. At Arg-483–Gln-489 the chain is on the cytoplasmic side. The helical transmembrane segment at Val-490 to His-510 threads the bilayer. Residues Ser-511–Asp-525 are Lumenal, vesicle-facing.

Belongs to the amino acid/polyamine transporter 2 family. Brain. Expressed at high levels within the neocortex, hippocampus, cerebellum, striatum, septal nuclei and the reticular nucleus of the thalamus. Also expressed in islets where it is more abundant in the peripheral/mantle region. Highly expressed in the nerve endings of GABA neurons in the brain and spinal cord but also in glycinergic nerve endings. Expressed in glycine-, GABA- or GABA- and glycine-containing boutons.

It is found in the cytoplasmic vesicle. The protein resides in the secretory vesicle. It localises to the synaptic vesicle membrane. Its subcellular location is the presynapse. It carries out the reaction beta-alanine(out) + n H(+)(in) = beta-alanine(in) + n H(+)(out). The enzyme catalyses 4-aminobutanoate(out) + n H(+)(in) = 4-aminobutanoate(in) + n H(+)(out). It catalyses the reaction glycine(out) + n H(+)(in) = glycine(in) + n H(+)(out). In terms of biological role, antiporter that exchanges vesicular protons for cytosolic 4-aminobutanoate or to a lesser extend glycine, thus allowing their secretion from nerve terminals. The transport is equally dependent on the chemical and electrical components of the proton gradient. May also transport beta-alanine. Acidification of GABAergic synaptic vesicles is a prerequisite for 4-aminobutanoate uptake. The polypeptide is Vesicular inhibitory amino acid transporter (Rattus norvegicus (Rat)).